The primary structure comprises 140 residues: Probable transport accessory protein MmpS4 (140 aa).

The chain crosses the membrane as a helical span at residues 2–22; sequence LMRTWIPLVILVVVIVGGFTV.

Belongs to the MmpS family.

The protein resides in the cell membrane. The sequence is that of Probable transport accessory protein MmpS4 (mmpS4) from Mycobacterium bovis (strain ATCC BAA-935 / AF2122/97).